The sequence spans 158 residues: Placenta growth factor (158 aa).

Positions 1–23 form a signal peptide, or 26; sequence MLAMKLFTCFLQVLAGLAVHSQG. N-linked (GlcNAc...) asparagine glycans are attached at residues Asn29 and Asn30. 3 disulfide bridges follow: Cys48-Cys90, Cys79-Cys125, and Cys83-Cys127. Asn97 carries an N-linked (GlcNAc...) asparagine glycan. The tract at residues 136–158 is disordered; that stretch reads AERRKTKGKRKQSKTPQTEEPHL. The segment covering 137-148 has biased composition (basic residues); that stretch reads ERRKTKGKRKQS.

This sequence belongs to the PDGF/VEGF growth factor family. Antiparallel homodimer; disulfide-linked. Also found as heterodimer with VEGFA/VEGF.

It localises to the secreted. Its function is as follows. Growth factor active in angiogenesis and endothelial cell growth, stimulating their proliferation and migration. It binds to the receptor FLT1/VEGFR-1. Also promotes cell tumor growth. This chain is Placenta growth factor (Pgf), found in Rattus norvegicus (Rat).